The sequence spans 255 residues: Diphthine synthase (255 aa).

Residues Leu9, Asp85, Val88, 113-114 (SI), Leu164, Ala207, and His232 each bind S-adenosyl-L-methionine.

The protein belongs to the diphthine synthase family. Homodimer.

The enzyme catalyses 2-[(3S)-amino-3-carboxypropyl]-L-histidyl-[translation elongation factor 2] + 3 S-adenosyl-L-methionine = diphthine-[translation elongation factor 2] + 3 S-adenosyl-L-homocysteine + 3 H(+). The protein operates within protein modification; peptidyl-diphthamide biosynthesis. Its function is as follows. S-adenosyl-L-methionine-dependent methyltransferase that catalyzes the trimethylation of the amino group of the modified target histidine residue in translation elongation factor 2 (EF-2), to form an intermediate called diphthine. The three successive methylation reactions represent the second step of diphthamide biosynthesis. The sequence is that of Diphthine synthase from Methanococcus maripaludis (strain C7 / ATCC BAA-1331).